A 778-amino-acid chain; its full sequence is Mitochondrial intermediate peptidase (778 aa).

The transit peptide at 1 to 37 directs the protein to the mitochondrion; it reads MIRTVTRPRQWQRWVYSSCLLQRAVPPAAARQQPRFT. His-557 provides a ligand contact to Zn(2+). Residue Glu-558 is part of the active site. Residues His-561 and His-564 each contribute to the Zn(2+) site.

It belongs to the peptidase M3 family. The cofactor is Zn(2+).

The protein resides in the mitochondrion matrix. It catalyses the reaction Release of an N-terminal octapeptide as second stage of processing of some proteins imported into the mitochondrion.. In terms of biological role, cleaves proteins, imported into the mitochondrion, to their mature size. While most mitochondrial precursor proteins are processed to the mature form in one step by mitochondrial processing peptidase (MPP), the sequential cleavage by MIP of an octapeptide after initial processing by MPP is a required step for a subgroup of nuclear-encoded precursor proteins destined for the matrix or the inner membrane. The protein is Mitochondrial intermediate peptidase (OCT1) of Chaetomium globosum (strain ATCC 6205 / CBS 148.51 / DSM 1962 / NBRC 6347 / NRRL 1970) (Soil fungus).